Here is a 343-residue protein sequence, read N- to C-terminus: Holliday junction branch migration complex subunit RuvB (343 aa).

The large ATPase domain (RuvB-L) stretch occupies residues 4–184; it reads SDRLISAKAG…FGIVQRLEFY (181 aa). Residues isoleucine 23, arginine 24, glycine 65, lysine 68, threonine 69, threonine 70, 131 to 133, arginine 174, tyrosine 184, and arginine 221 contribute to the ATP site; that span reads EDY. Position 69 (threonine 69) interacts with Mg(2+). The tract at residues 185–255 is small ATPAse domain (RuvB-S); that stretch reads NHQDLTHIIT…IADQALNMLK (71 aa). A head domain (RuvB-H) region spans residues 258 to 343; sequence SQGFDHMDRR…RSGREDDLFE (86 aa). 3 residues coordinate DNA: arginine 294, arginine 313, and arginine 318.

The protein belongs to the RuvB family. In terms of assembly, homohexamer. Forms an RuvA(8)-RuvB(12)-Holliday junction (HJ) complex. HJ DNA is sandwiched between 2 RuvA tetramers; dsDNA enters through RuvA and exits via RuvB. An RuvB hexamer assembles on each DNA strand where it exits the tetramer. Each RuvB hexamer is contacted by two RuvA subunits (via domain III) on 2 adjacent RuvB subunits; this complex drives branch migration. In the full resolvosome a probable DNA-RuvA(4)-RuvB(12)-RuvC(2) complex forms which resolves the HJ.

Its subcellular location is the cytoplasm. The catalysed reaction is ATP + H2O = ADP + phosphate + H(+). Its function is as follows. The RuvA-RuvB-RuvC complex processes Holliday junction (HJ) DNA during genetic recombination and DNA repair, while the RuvA-RuvB complex plays an important role in the rescue of blocked DNA replication forks via replication fork reversal (RFR). RuvA specifically binds to HJ cruciform DNA, conferring on it an open structure. The RuvB hexamer acts as an ATP-dependent pump, pulling dsDNA into and through the RuvAB complex. RuvB forms 2 homohexamers on either side of HJ DNA bound by 1 or 2 RuvA tetramers; 4 subunits per hexamer contact DNA at a time. Coordinated motions by a converter formed by DNA-disengaged RuvB subunits stimulates ATP hydrolysis and nucleotide exchange. Immobilization of the converter enables RuvB to convert the ATP-contained energy into a lever motion, pulling 2 nucleotides of DNA out of the RuvA tetramer per ATP hydrolyzed, thus driving DNA branch migration. The RuvB motors rotate together with the DNA substrate, which together with the progressing nucleotide cycle form the mechanistic basis for DNA recombination by continuous HJ branch migration. Branch migration allows RuvC to scan DNA until it finds its consensus sequence, where it cleaves and resolves cruciform DNA. This is Holliday junction branch migration complex subunit RuvB from Marinobacter nauticus (strain ATCC 700491 / DSM 11845 / VT8) (Marinobacter aquaeolei).